A 214-amino-acid polypeptide reads, in one-letter code: Adenylate kinase (214 aa).

ATP is bound at residue G10–T15. The segment at S30 to V59 is NMP. Residues T31, R36, Q57–V59, G85–R88, and Q92 contribute to the AMP site. The segment at G122–D159 is LID. ATP contacts are provided by residues R123 and V132–Y133. Positions 156 and 167 each coordinate AMP. Q200 contacts ATP.

Belongs to the adenylate kinase family. In terms of assembly, monomer.

Its subcellular location is the cytoplasm. The enzyme catalyses AMP + ATP = 2 ADP. It functions in the pathway purine metabolism; AMP biosynthesis via salvage pathway; AMP from ADP: step 1/1. Its function is as follows. Catalyzes the reversible transfer of the terminal phosphate group between ATP and AMP. Plays an important role in cellular energy homeostasis and in adenine nucleotide metabolism. This is Adenylate kinase from Colwellia psychrerythraea (strain 34H / ATCC BAA-681) (Vibrio psychroerythus).